A 170-amino-acid polypeptide reads, in one-letter code: Cytidine diphosphoramidate kinase (170 aa).

The protein belongs to the APS kinase family.

The catalysed reaction is cytidine 5'-diphosphoramidate + ATP = cytidine 3'-phospho-5'-diphosphoramidate + ADP + H(+). It participates in capsule biogenesis; capsule polysaccharide biosynthesis. Functionally, involved in the biosynthesis of the O-methyl phosphoramidate (MeOPN) group found on the capsular polysaccharide (CPS) of C.jejuni. Catalyzes the ATP-dependent phosphorylation of cytidine diphosphoramidate (CDP-NH(2)) to form cytidine 3'-phosphate 5'-diphosphoramidate. Can also use other substrates such as the corresponding adenine and uridine diphosphoramidate derivatives or cytidine diphosphoramidate analogs, with lower efficiency. The polypeptide is Cytidine diphosphoramidate kinase (Campylobacter jejuni subsp. jejuni serotype O:2 (strain ATCC 700819 / NCTC 11168)).